We begin with the raw amino-acid sequence, 67 residues long: Pepsin B (67 aa).

The propeptide at 1–43 is activation peptide; it reads MERIILRKGKSIREAMEEQGVLEKFLKNRPKIDPAAKYHFNND.

This sequence belongs to the peptidase A1 family.

It localises to the secreted. It catalyses the reaction Degradation of gelatin, little activity on hemoglobin. Specificity on B chain of insulin more restricted than that of pepsin A. Does not cleave 1-Phe-|-Val-2, 4-Gln-|-His-5 or 23-Gly-|-Phe-24.. The sequence is that of Pepsin B (PGB) from Sus scrofa (Pig).